The chain runs to 543 residues: MARYIFITGGVVSSLGKGLASAALGALLQARGYKVRLRKLDPYLNLDPGTMSPYQHGEVFVTDDGAETDLDLGHYERFTGRPATRQDNITTGRIYQDILTKERRGDYLGATIQVVPHVTNAIKDFIVDSNDGYDFVLVEIGGTVGDIEGLPFFEAIRQIKNDLPRGDVIYIHLTLLPYIPSAGELKTKPTQHSVKELRSIGIQPDILLCRTDRPIPKEERRKLGLFCNVRESAVIEARDADSIYAVPEAYHAAGLDDEVLAAFAIAAEQPPALERWHQINERIRNPEGAVTIAIVGKYTGMKDAYKSLIEALSHGGIANKVQVKLDWIESEVFENEDPAPFLEHVNGILVPGGFGQRGAEGKIKAAQFARERDVPYFGICFGMQMAVIEAARNLAGIEQANSTEFGPTAEPLVGLMTEWLRGNELERRSNAGDLGGTMRLGAYPAALKRGSRVSKIYGDVLEISERHRHRYEVNTAYKDRLEQHGLRFSGMSPDGVLPEIVEYEDHPWFIGVQFHPELKSRPFEPHPLFSSFIEAALVRSRLV.

Positions 1–265 (MARYIFITGG…DDEVLAAFAI (265 aa)) are amidoligase domain. Ser-13 lines the CTP pocket. Position 13 (Ser-13) interacts with UTP. ATP is bound at residue 14–19 (SLGKGL). Tyr-54 is a binding site for L-glutamine. Asp-71 serves as a coordination point for ATP. Asp-71 and Glu-139 together coordinate Mg(2+). Residues 146 to 148 (DIE), 186 to 191 (KTKPTQ), and Lys-222 contribute to the CTP site. UTP contacts are provided by residues 186–191 (KTKPTQ) and Lys-222. 238 to 240 (RDA) is an ATP binding site. Residues 291-542 (TIAIVGKYTG…IEAALVRSRL (252 aa)) form the Glutamine amidotransferase type-1 domain. Gly-353 lines the L-glutamine pocket. Residue Cys-380 is the Nucleophile; for glutamine hydrolysis of the active site. Residues 381–384 (FGMQ), Glu-404, and Arg-470 contribute to the L-glutamine site. Residues His-515 and Glu-517 contribute to the active site.

The protein belongs to the CTP synthase family. In terms of assembly, homotetramer.

The catalysed reaction is UTP + L-glutamine + ATP + H2O = CTP + L-glutamate + ADP + phosphate + 2 H(+). It catalyses the reaction L-glutamine + H2O = L-glutamate + NH4(+). It carries out the reaction UTP + NH4(+) + ATP = CTP + ADP + phosphate + 2 H(+). Its pathway is pyrimidine metabolism; CTP biosynthesis via de novo pathway; CTP from UDP: step 2/2. Allosterically activated by GTP, when glutamine is the substrate; GTP has no effect on the reaction when ammonia is the substrate. The allosteric effector GTP functions by stabilizing the protein conformation that binds the tetrahedral intermediate(s) formed during glutamine hydrolysis. Inhibited by the product CTP, via allosteric rather than competitive inhibition. Its function is as follows. Catalyzes the ATP-dependent amination of UTP to CTP with either L-glutamine or ammonia as the source of nitrogen. Regulates intracellular CTP levels through interactions with the four ribonucleotide triphosphates. This Rhodopseudomonas palustris (strain HaA2) protein is CTP synthase.